Here is a 122-residue protein sequence, read N- to C-terminus: MIQKETNLVVADNSGAKKVRCIHVFGGTGRRYAGLGDQVIVSVKAAVPGGVVKKKDVCKAVVVRCAKEQRRKDGSYIRFDENAVVLLNAQGEPRGTRIFGPVARELRDRKYMKIVSLAPEVL.

The protein belongs to the universal ribosomal protein uL14 family. As to quaternary structure, part of the 50S ribosomal subunit. Forms a cluster with proteins L3 and L19. In the 70S ribosome, L14 and L19 interact and together make contacts with the 16S rRNA in bridges B5 and B8.

In terms of biological role, binds to 23S rRNA. Forms part of two intersubunit bridges in the 70S ribosome. The chain is Large ribosomal subunit protein uL14 from Chlorobium limicola (strain DSM 245 / NBRC 103803 / 6330).